The sequence spans 333 residues: Global transcription regulator sge1 (333 aa).

2 disordered regions span residues proline 93–proline 139 and glutamine 241–glutamine 307.

This sequence belongs to the MIT1/WOR1 family.

The protein localises to the nucleus. In terms of biological role, global transcriptional regulator that acts as an activator of secondary metabolism. Required for expression of a yet uncharacterized secondary metabolism gene cluster containing a non-canonical non-ribosomal peptide synthetase. Not required for conidiogenesis nor for pathogenicity, but is involved in vegetative growth. This chain is Global transcription regulator sge1, found in Gibberella fujikuroi (strain CBS 195.34 / IMI 58289 / NRRL A-6831) (Bakanae and foot rot disease fungus).